The following is a 376-amino-acid chain: RING-H2 finger protein ATL46 (376 aa).

A helical transmembrane segment spans residues 45 to 65 (VLFVIVILAVLFFISGLLHLL). Residues 143–185 (CAVCLCEFSEKDKLRLLPMCSHAFHLNCIDTWLQSNSTCPLCR) form an RING-type; atypical zinc finger. 2 stretches are compositionally biased toward basic and acidic residues: residues 296–305 (RLKPQDKESE) and 358–376 (DLPK…NDGR). 2 disordered regions span residues 296-320 (RLKP…KINT) and 341-376 (FSSD…NDGR).

Belongs to the RING-type zinc finger family. ATL subfamily.

It localises to the membrane. It carries out the reaction S-ubiquitinyl-[E2 ubiquitin-conjugating enzyme]-L-cysteine + [acceptor protein]-L-lysine = [E2 ubiquitin-conjugating enzyme]-L-cysteine + N(6)-ubiquitinyl-[acceptor protein]-L-lysine.. It functions in the pathway protein modification; protein ubiquitination. The polypeptide is RING-H2 finger protein ATL46 (ATL46) (Arabidopsis thaliana (Mouse-ear cress)).